Here is a 1338-residue protein sequence, read N- to C-terminus: MDRASELLFYVNGRKVIEKNVDPETMLLPYLRKKLRLTGTKYGCGGGGCGACTVMISRYNPITNRIRHHPANACLIPICSLYGTAVTTVEGIGSTHTRIHPVQERIAKCHGTQCGFCTPGMVMSIYTLLRNHPEPTLDQLTDALGGNLCRCTGYRPIIDACKTFCETSGCCQSKENGVCCLDQRINGLPEFEEGSKTSPKLFAEEEFLPLDPTQELIFPPELMIMAEKQPQRTRVFGSERMMWFSPVTLKELLEFKFKYPQAPVIMGNTSVGPQMKFKGVFHPVIISPDRIEELSVVNHTHNGLTLGAGLSLAQVKDILADVVQKLPGEKTQTYHALLKHLGTLAGSQIRNMASLGGHIISRHPDSDLNPILAVGNCTLNLLSKEGKRQIPLNEQFLSKCPNADLKPQEILVSVNIPYSRKLEFVSAFRQAQRQENALAIVNSGMRVFFGEGHGIIRELSISYGGVGPATICAKNSCQKLIGRHWNEEMLDTACRLVLEEVSLSGSAPGGRVEFKRTLIISFLFKFYLEVSQILKKMDPIRYPSLADKHESALEDLHSKHHCSTLKYQHMGPKQHPEDPIGHPIMHLSGVKHATGEAIYCDDMPLVDQELFLTFVTSSRAHAKIVSIDLSEALSMPGVVDVITAEHLSDVNSFCFFTEAEEFLATDKVFCVGQLVCAVLADSEVQAKRAAKQVKIVYQDLEPLILTIKEAIQHNSFFEPERKLEYGNVDEAFKVVDQILEGEIHMGGQEHFYMETQSMLVVPKGEDQEMDVYVSTQFPKYIQDIVASTLKLPANKVMCHVKRVGGAFGGKAFKTGVIAAVTAFAANKHGRAVRCVLERGEDMLITGGRHPYLGKYKAGFMNDGRILALDMEHYSNAGNSLDESLLVIEMGLLKMDNAYKFPNLRCRGWACRTNLPSNTAFRGFGFPQAGLITESCIMEVAAKCGLSPEKVRMINMYKEIDQTPYKQEINAKNLIQCWRECMAVSSYSLRKAAVEKFNAENYWKKKGLAMVPLKYPVGLGSRAAGQAAALVHIYLDGSVLVTHGGIEMGQGVHTKMIQVVSRELGMPISNVHLRGTSTETVPNANVSGGSVVADLNGLAVKDACQTLLKRLEPIISKNPKGTWKDWAQTAFDESISLSAVGYFRGYESDINWEKGEGHPFEYFVYGAACSEVEIDCLTGDHKNIRTDIVMDVGCSINPAIDIGQIEGAFIQGMGLYTIEELNYSPQGVLHTRGPDQYKIPAICDTPTEFHISLLPPSENSNTLYSSKGLGESGVFLGCSVFFAIHDAVSAARRERGLHGPLSLNSPLTPEKIRMACEDKFTKMIPRDEPGSCVPWNVPI.

The 88-residue stretch at 5 to 92 (SELLFYVNGR…GTAVTTVEGI (88 aa)) folds into the 2Fe-2S ferredoxin-type domain. Mo-molybdopterin contacts are provided by Gln113 and Cys151. Positions 236–421 (FGSERMMWFS…VSVNIPYSRK (186 aa)) constitute an FAD-binding PCMH-type domain. FAD-binding positions include 264-271 (VIMGNTSV), Ala345, Ser354, His358, Asp367, and Leu411. Residues 806–807 (AF) and Met1047 contribute to the Mo-molybdopterin site. At Ser1068 the chain carries Phosphoserine. Residues 1088–1091 (GSVV), Gln1203, and Leu1268 each bind Mo-molybdopterin. Residue Glu1270 is the Proton acceptor; for azaheterocycle hydroxylase activity of the active site.

It belongs to the xanthine dehydrogenase family. In terms of assembly, homodimer. It depends on [2Fe-2S] cluster as a cofactor. The cofactor is FAD. Requires Mo-molybdopterin as cofactor. In terms of tissue distribution, detected at high levels in liver, also detected in lung, kidney, lacrimal gland and olfactory mucosa.

The protein localises to the cytoplasm. The enzyme catalyses an aldehyde + O2 + H2O = a carboxylate + H2O2 + H(+). The catalysed reaction is retinal + O2 + H2O = retinoate + H2O2 + H(+). Oxidase with broad substrate specificity, oxidizing aromatic azaheterocycles, such as N1-methylnicotinamide, N-methylphthalazinium and phthalazine, as well as aldehydes, such as benzaldehyde, retinal, pyridoxal, and vanillin. Plays a key role in the metabolism of xenobiotics and drugs containing aromatic azaheterocyclic substituents. Participates in the bioactivation of prodrugs such as famciclovir, catalyzing the oxidation step from 6-deoxypenciclovir to penciclovir, which is a potent antiviral agent. Is probably involved in the regulation of reactive oxygen species homeostasis. May be a prominent source of superoxide generation via the one-electron reduction of molecular oxygen. May also catalyze nitric oxide (NO) production via the reduction of nitrite to NO with NADH or aldehyde as electron donor. May play a role in adipogenesis. In Macaca fascicularis (Crab-eating macaque), this protein is Aldehyde oxidase 1 (AOX1).